A 432-amino-acid chain; its full sequence is Putative D-alanyl-D-alanine carboxypeptidase (432 aa).

A helical; Signal-anchor transmembrane segment spans residues 7 to 25; it reads ATVLLTFSLSAFAVEYPVL.

This sequence belongs to the peptidase S12 family. YfeW subfamily.

It localises to the cell inner membrane. It catalyses the reaction Preferential cleavage: (Ac)2-L-Lys-D-Ala-|-D-Ala. Also transpeptidation of peptidyl-alanyl moieties that are N-acyl substituents of D-alanine.. This is Putative D-alanyl-D-alanine carboxypeptidase from Salmonella schwarzengrund (strain CVM19633).